The sequence spans 269 residues: Thymidylate synthase (269 aa).

Residues arginine 21 and 125–126 (RR) each bind dUMP. The Nucleophile role is filled by cysteine 145. Residues 171–174 (RSGD), asparagine 182, and 212–214 (HVY) contribute to the dUMP site. Aspartate 174 contributes to the (6R)-5,10-methylene-5,6,7,8-tetrahydrofolate binding site. Position 268 (alanine 268) interacts with (6R)-5,10-methylene-5,6,7,8-tetrahydrofolate.

Belongs to the thymidylate synthase family. Bacterial-type ThyA subfamily. In terms of assembly, homodimer.

The protein resides in the cytoplasm. The enzyme catalyses dUMP + (6R)-5,10-methylene-5,6,7,8-tetrahydrofolate = 7,8-dihydrofolate + dTMP. The protein operates within pyrimidine metabolism; dTTP biosynthesis. Catalyzes the reductive methylation of 2'-deoxyuridine-5'-monophosphate (dUMP) to 2'-deoxythymidine-5'-monophosphate (dTMP) while utilizing 5,10-methylenetetrahydrofolate (mTHF) as the methyl donor and reductant in the reaction, yielding dihydrofolate (DHF) as a by-product. This enzymatic reaction provides an intracellular de novo source of dTMP, an essential precursor for DNA biosynthesis. The chain is Thymidylate synthase from Cutibacterium acnes (strain DSM 16379 / KPA171202) (Propionibacterium acnes).